The sequence spans 413 residues: Cell division protein FtsZ 2 (413 aa).

GTP is bound by residues 132-134, glutamate 171, arginine 175, and aspartate 218; that span reads GTG.

This sequence belongs to the FtsZ family. Homodimer. Polymerizes to form a dynamic ring structure in a strictly GTP-dependent manner. Interacts directly with several other division proteins.

The protein localises to the cytoplasm. Essential cell division protein that forms a contractile ring structure (Z ring) at the future cell division site. The regulation of the ring assembly controls the timing and the location of cell division. One of the functions of the FtsZ ring is to recruit other cell division proteins to the septum to produce a new cell wall between the dividing cells. Binds GTP and shows GTPase activity. The sequence is that of Cell division protein FtsZ 2 from Thermococcus kodakarensis (strain ATCC BAA-918 / JCM 12380 / KOD1) (Pyrococcus kodakaraensis (strain KOD1)).